Reading from the N-terminus, the 156-residue chain is Transcriptional repressor NrdR (156 aa).

A zinc finger lies at 3–34 (CPKCNSTHSRVVDSRHADEANAIRRRRECENC). The 91-residue stretch at 49 to 139 (LIVVKKDGTR…VYKEFKDVDQ (91 aa)) folds into the ATP-cone domain.

Belongs to the NrdR family. The cofactor is Zn(2+).

Negatively regulates transcription of bacterial ribonucleotide reductase nrd genes and operons by binding to NrdR-boxes. The protein is Transcriptional repressor NrdR of Staphylococcus epidermidis (strain ATCC 35984 / DSM 28319 / BCRC 17069 / CCUG 31568 / BM 3577 / RP62A).